A 1148-amino-acid polypeptide reads, in one-letter code: MPEQYRYTLPVKAGEQRLLGELTGAACATLVAEIAERHAGPVVLIAPDMQNALRLHDEISQFTDQMVMNLADWETLPYDSFSPHQDIISSRLSTLYQLPTMQRGVLIVPVNTLMQRVCPHSFLHGHALVMKKGQRLSRDALRTQLDSAGYRHVDQVMEHGEYATRGALLDLFPMGSELPYRLDFFDDEIDSLRVFDVDSQRTLEEVEAINLLPAHEFPTDKAAIELFRSQWRDTFEVKRDPEHIYQQVSKGTLPAGIEYWQPLFFSEPLPPLFSYFPANTLLVNTGDLETSAERFQADTLARFENRGVDPMRPLLPPQSLWLRVDELFSELKNWPRVQLKTEHLPTKAANANLGFQKLPDLAVQAQQKAPLDALRKFLETFDGPVVFSVESEGRREALGELLARIKIAPQRIMRLDEASDRGRYLMIGAAEHGFVDTVRNLALICESDLLGERVARRRQDSRRTINPDTLIRNLAELHIGQPVVHLEHGVGRYAGMTTLEAGGITGEYLMLTYANDAKLYVPVSSLHLISRYAGGAEENAPLHKLGGDAWSRARQKAAEKVRDVAAELLDIYAQRAAKEGFAFKHDREQYQLFCDSFPFETTPDQAQAINAVLSDMCQPLAMDRLVCGDVGFGKTEVAMRAAFLAVDNHKQVAVLVPTTLLAQQHYDNFRDRFANWPVRIEMISRFRSAKEQTQILAEVAEGKIDILIGTHKLLQSDVKFKDLGLLIVDEEHRFGVRHKERIKAMRANVDILTLTATPIPRTLNMAMSGMRDLSIIATPPARRLAVKTFVREYDSMVVREAILREILRGGQVYYLYNDVENIQKAAERLAELVPEARIAIGHGQMRERELERVMNDFHHQRFNVLVCTTIIETGIDIPTANTIIIERADHFGLAQLHQLRGRVGRSHHQAYAWLLTPHPKAMTTDAQKRLEAIASLEDLGAGFALATHDLEIRGAGELLGEEQSGSMETIGFSLYMELLENAVDALKAGREPSLEDLTSQQTEVELRMPSLLPDDFIPDVNTRLSFYKRIASAKTENELEEIKVELIDRFGLLPDPARTLLDIARLRQQAQKLGIRKLEGNEKGGVIEFAEKNHVNPAWLIGLLQKQPQHYRLDGPTRLKFIQDLSERKTRIEWVRQFMRELEENAIA.

A Helicase ATP-binding domain is found at 615–776 (DMCQPLAMDR…MSGMRDLSII (162 aa)). Residue 628–635 (GDVGFGKT) coordinates ATP. The DEEH box motif lies at 729–732 (DEEH). The 154-residue stretch at 798-951 (VREAILREIL…GFALATHDLE (154 aa)) folds into the Helicase C-terminal domain.

The protein in the N-terminal section; belongs to the UvrB family. It in the C-terminal section; belongs to the helicase family. RecG subfamily. Monomer. Interacts with UvrA and RNAP.

The protein localises to the cytoplasm. Its function is as follows. Couples transcription and DNA repair by recognizing RNA polymerase (RNAP) stalled at DNA lesions. Mediates ATP-dependent release of RNAP and its truncated transcript from the DNA, and recruitment of nucleotide excision repair machinery to the damaged site. Can also dissociate RNAP that is blocked by low concentration of nucleoside triphosphates or by physical obstruction, such as bound proteins. In addition, can rescue arrested complexes by promoting forward translocation. Has ATPase activity, which is required for removal of stalled RNAP, but seems to lack helicase activity. May act through a translocase activity that rewinds upstream DNA, leading either to translocation or to release of RNAP when the enzyme active site cannot continue elongation. The sequence is that of Transcription-repair-coupling factor from Escherichia coli (strain K12).